A 329-amino-acid polypeptide reads, in one-letter code: Deoxynucleotidyltransferase terminal-interacting protein 1 (329 aa).

2 disordered regions span residues 1–22 (MGATGDAEQPRGPSGAERGGLE) and 147–178 (KRGRQAEEECAHRGSPLPKKRKGRPPGHILSS). Residues 56-147 (MTTSFTDPAI…RLTHELPGIK (92 aa)) are important for dimerization. Residues 147–158 (KRGRQAEEECAH) are compositionally biased toward basic and acidic residues. The segment at residues 159–173 (RGSPLPKKRKGRPPG) is a DNA-binding region (a.T hook). Ser-161 is modified (phosphoserine). Positions 164 to 170 (PKKRKGR) match the Nuclear localization signal motif. Positions 197–316 (REGPKWDPAR…MRKYMETLRT (120 aa)) are important for DNA and nucleosome binding. Positions 216–237 (GSRANKALGMGGTRGRIYIKHP) form a DNA-binding region, H-T-H motif.

Monomer and homodimer. A minor proportion may form homotrimers. Interacts with ZNF541. Interacts with the terminal deoxynucleotidyltransferase DNTT. Interacts with TRERF1. Identified in a histone deacetylase complex that contains DNTTIP1, HDAC1 and MIDEAS; this complex assembles into a tetramer that contains four copies of each protein chain. Component of a histone deacetylase complex containing DNTTIP1, ZNF541, HDAC1 and HDAC2. Identified in a complex with KCTD19, HDAC1, HDAC2 and ZNF541.

It localises to the nucleus. Functionally, increases DNTT terminal deoxynucleotidyltransferase activity (in vitro). Also acts as a transcriptional regulator, binding to the consensus sequence 5'-GNTGCATG-3' following an AT-tract. Associates with RAB20 promoter and positively regulates its transcription. Binds DNA and nucleosomes; may recruit HDAC1 complexes to nucleosomes or naked DNA. This is Deoxynucleotidyltransferase terminal-interacting protein 1 (DNTTIP1) from Homo sapiens (Human).